Reading from the N-terminus, the 380-residue chain is Cytochrome b (380 aa).

4 helical membrane-spanning segments follow: residues 34-54, 78-99, 114-134, and 179-199; these read FGSL…LLAM, WLIR…YLHI, WNTG…GYVL, and FFAL…IHLT. Positions 84 and 98 each coordinate heme b. Residues histidine 183 and histidine 197 each coordinate heme b. Histidine 202 contributes to the a ubiquinone binding site. 4 helical membrane-spanning segments follow: residues 227 to 247, 289 to 309, 321 to 341, and 348 to 368; these read IKDI…ALFS, LGGV…PFLH, FSQL…WVGS, and FIII…ILFP.

This sequence belongs to the cytochrome b family. In terms of assembly, the cytochrome bc1 complex contains 11 subunits: 3 respiratory subunits (MT-CYB, CYC1 and UQCRFS1), 2 core proteins (UQCRC1 and UQCRC2) and 6 low-molecular weight proteins (UQCRH/QCR6, UQCRB/QCR7, UQCRQ/QCR8, UQCR10/QCR9, UQCR11/QCR10 and a cleavage product of UQCRFS1). This cytochrome bc1 complex then forms a dimer. Heme b is required as a cofactor.

It localises to the mitochondrion inner membrane. Its function is as follows. Component of the ubiquinol-cytochrome c reductase complex (complex III or cytochrome b-c1 complex) that is part of the mitochondrial respiratory chain. The b-c1 complex mediates electron transfer from ubiquinol to cytochrome c. Contributes to the generation of a proton gradient across the mitochondrial membrane that is then used for ATP synthesis. This Numida meleagris (Helmeted guineafowl) protein is Cytochrome b (MT-CYB).